A 390-amino-acid polypeptide reads, in one-letter code: Ureide permease 1 (390 aa).

Residues 1–9 (MYMIESKGG) are Extracellular-facing. The chain crosses the membrane as a helical span at residues 10-30 (AIACMLLALLFLGTWPAIMTL). Residues 31-44 (TERRGRLPQHTYLD) lie on the Cytoplasmic side of the membrane. Residues 45–65 (YTLTNLLAAVIIALTLGEIGP) form a helical membrane-spanning segment. Residues 66-78 (SRPNFFTQLSQDN) lie on the Extracellular side of the membrane. The chain crosses the membrane as a helical span at residues 79-99 (WQSVMFAMAGGIVLSLGNLAT). Topologically, residues 100 to 101 (QY) are cytoplasmic. A helical membrane pass occupies residues 102 to 122 (AWAYVGLSVTEVITASITVVI). The Extracellular portion of the chain corresponds to 123–136 (GTTLNYFLDDRINR). Residues 137–157 (AEVLFPGVACFLIAVCFGSAV) traverse the membrane as a helical segment. The Cytoplasmic segment spans residues 158 to 221 (HKSNAADNKT…RAIKVFGKST (64 aa)). 213–220 (AIKVFGKS) contributes to the ATP binding site. A helical membrane pass occupies residues 222–242 (IIGLVITFFAGICFSLFSPAF). Residues 243-261 (NLATNDQWHTLKHGVPKLN) lie on the Extracellular side of the membrane. Residues 262 to 282 (VYTAFFYFSISAFVVALILNI) traverse the membrane as a helical segment. The Cytoplasmic segment spans residues 283 to 307 (RFLYWPILGLPRSSFKAYLNDWNGR). A helical transmembrane segment spans residues 308-328 (GWSFLAGFLCGFGNGLQFMGG). The Extracellular portion of the chain corresponds to 329–333 (QAAGY). The chain crosses the membrane as a helical span at residues 334–354 (AAADAVQALPLVSTFWGILLF). Topologically, residues 355–363 (GEYRRSSRK) are cytoplasmic. Residues 364–384 (TYTLLISMLLMFIVAVAVLMA) form a helical membrane-spanning segment. The Extracellular segment spans residues 385–390 (SSGHRK).

It belongs to the plant ureide permease (TC 2.A.7.19) family. As to expression, expressed in leaves, flowers, roots and stems.

It localises to the membrane. Functionally, proton-coupled transporter that transports a wide spectrum of oxo derivatives of heterocyclic nitrogen compounds, including allantoin, uric acid and xanthine, but not adenine. Mediates high affinity transport of uracil and 5-fluorouracil (a toxic uracil analog). Mediates transport of free pyrimidines and may function during early seedling development in salvage pathways, by the utilization of pyrimidines from seed storage tissue. This chain is Ureide permease 1, found in Arabidopsis thaliana (Mouse-ear cress).